A 412-amino-acid polypeptide reads, in one-letter code: Gamma-glutamyl phosphate reductase (412 aa).

This sequence belongs to the gamma-glutamyl phosphate reductase family.

The protein localises to the cytoplasm. The catalysed reaction is L-glutamate 5-semialdehyde + phosphate + NADP(+) = L-glutamyl 5-phosphate + NADPH + H(+). It participates in amino-acid biosynthesis; L-proline biosynthesis; L-glutamate 5-semialdehyde from L-glutamate: step 2/2. Its function is as follows. Catalyzes the NADPH-dependent reduction of L-glutamate 5-phosphate into L-glutamate 5-semialdehyde and phosphate. The product spontaneously undergoes cyclization to form 1-pyrroline-5-carboxylate. The polypeptide is Gamma-glutamyl phosphate reductase (Actinobacillus pleuropneumoniae serotype 5b (strain L20)).